The following is a 120-amino-acid chain: MFLLYEYDIFWAFLIISSAIPVLAFLISGVLSPIRKGPEKLSSYESGIEPIGDAWLQFRIRYYMFALVFVVFDVETVFLYPWAMSFDVLGVSAFIEVFIFVLILILGLVYAWRKGALEWS.

3 helical membrane-spanning segments follow: residues 9–29 (IFWA…LISG), 64–84 (MFAL…PWAM), and 88–108 (VLGV…ILGL).

It belongs to the complex I subunit 3 family. As to quaternary structure, NDH is composed of at least 16 different subunits, 5 of which are encoded in the nucleus.

It is found in the plastid. It localises to the chloroplast thylakoid membrane. It carries out the reaction a plastoquinone + NADH + (n+1) H(+)(in) = a plastoquinol + NAD(+) + n H(+)(out). It catalyses the reaction a plastoquinone + NADPH + (n+1) H(+)(in) = a plastoquinol + NADP(+) + n H(+)(out). Its function is as follows. NDH shuttles electrons from NAD(P)H:plastoquinone, via FMN and iron-sulfur (Fe-S) centers, to quinones in the photosynthetic chain and possibly in a chloroplast respiratory chain. The immediate electron acceptor for the enzyme in this species is believed to be plastoquinone. Couples the redox reaction to proton translocation, and thus conserves the redox energy in a proton gradient. This chain is NAD(P)H-quinone oxidoreductase subunit 3, chloroplastic, found in Arabis hirsuta (Hairy rock-cress).